Here is a 245-residue protein sequence, read N- to C-terminus: Probable phosphatase YE2421 (245 aa).

Zn(2+) is bound by residues H7, H9, H15, H40, E73, H101, H131, D192, and H194.

Belongs to the PHP family. In terms of assembly, homotrimer. Zn(2+) is required as a cofactor.

The chain is Probable phosphatase YE2421 from Yersinia enterocolitica serotype O:8 / biotype 1B (strain NCTC 13174 / 8081).